Here is a 468-residue protein sequence, read N- to C-terminus: ERO1-like protein alpha (468 aa).

The N-terminal stretch at 1–23 (MGRGWGFLFGLLGAVWLLSSGHG) is a signal peptide. 8 disulfides stabilise this stretch: Cys-35/Cys-48, Cys-37/Cys-46, Cys-85/Cys-391, Cys-94/Cys-99, Cys-94/Cys-131, Cys-99/Cys-104, Cys-208/Cys-241, and Cys-394/Cys-397. 2 positions are modified to phosphoserine: Ser-106 and Ser-143. Ser-145 carries the phosphoserine; by FAM20C modification. FAD is bound by residues Arg-187, Thr-189, and Trp-200. Residues Ser-252 and His-255 each contribute to the FAD site. The N-linked (GlcNAc...) asparagine glycan is linked to Asn-280. FAD-binding residues include Arg-287 and Arg-300. An N-linked (GlcNAc...) asparagine glycan is attached at Asn-384.

Belongs to the EROs family. Predominantly monomer. May function both as a monomer and a homodimer. Interacts with PDILT. Interacts with ERP44; the interaction results in retention of ERO1A in the endoplasmic reticulum. FAD serves as cofactor. N-glycosylated. In terms of processing, the Cys-94/Cys-99 and Cys-394/Cys-397 disulfide bonds constitute the redox-active center. The Cys-94/Cys-99 disulfide bond may accept electron from P4HB and funnel them to the active site disulfide Cys-394/Cys-397. The regulatory Cys-99/Cys-104 disulfide bond stabilizes the other regulatory bond Cys-94/Cys-131. Post-translationally, phosphorylated on Ser-145 by FAM20C in the Golgi which increases its enzymatic activity. Phosphorylation is induced by lactation. It is also induced by hypoxia and reductive stress. Widely expressed at low level. Expressed at high level in upper digestive tract. Highly expressed in esophagus. Weakly expressed in stomach and duodenum.

Its subcellular location is the endoplasmic reticulum membrane. It is found in the golgi apparatus lumen. The protein resides in the secreted. It localises to the cell projection. The protein localises to the dendrite. With respect to regulation, enzyme activity is tightly regulated to prevent the accumulation of reactive oxygen species in the endoplasmic reticulum. Reversibly down-regulated by the formation of disulfide bonds between the active site Cys-94 and Cys-131, and between Cys-99 and Cys-104. Glutathione may be required to regulate its activity in the endoplasmic reticulum. In terms of biological role, oxidoreductase involved in disulfide bond formation in the endoplasmic reticulum. Efficiently reoxidizes P4HB/PDI, the enzyme catalyzing protein disulfide formation, in order to allow P4HB to sustain additional rounds of disulfide formation. Following P4HB reoxidation, passes its electrons to molecular oxygen via FAD, leading to the production of reactive oxygen species (ROS) in the cell. Required for the proper folding of immunoglobulins. Plays an important role in ER stress-induced, CHOP-dependent apoptosis by activating the inositol 1,4,5-trisphosphate receptor IP3R1. Involved in the release of the unfolded cholera toxin from reduced P4HB/PDI in case of infection by V.cholerae, thereby playing a role in retrotranslocation of the toxin. The polypeptide is ERO1-like protein alpha (Homo sapiens (Human)).